A 218-amino-acid polypeptide reads, in one-letter code: Phosphoribosylformylglycinamidine synthase subunit PurQ (218 aa).

Residues 2 to 218 enclose the Glutamine amidotransferase type-1 domain; it reads RVGVIRFPGS…FFRGILKFRG (217 aa). The Nucleophile role is filled by Cys-85. Residues His-192 and Glu-194 contribute to the active site.

Part of the FGAM synthase complex composed of 1 PurL, 1 PurQ and 2 PurS subunits.

The protein localises to the cytoplasm. The enzyme catalyses N(2)-formyl-N(1)-(5-phospho-beta-D-ribosyl)glycinamide + L-glutamine + ATP + H2O = 2-formamido-N(1)-(5-O-phospho-beta-D-ribosyl)acetamidine + L-glutamate + ADP + phosphate + H(+). The catalysed reaction is L-glutamine + H2O = L-glutamate + NH4(+). Its pathway is purine metabolism; IMP biosynthesis via de novo pathway; 5-amino-1-(5-phospho-D-ribosyl)imidazole from N(2)-formyl-N(1)-(5-phospho-D-ribosyl)glycinamide: step 1/2. Functionally, part of the phosphoribosylformylglycinamidine synthase complex involved in the purines biosynthetic pathway. Catalyzes the ATP-dependent conversion of formylglycinamide ribonucleotide (FGAR) and glutamine to yield formylglycinamidine ribonucleotide (FGAM) and glutamate. The FGAM synthase complex is composed of three subunits. PurQ produces an ammonia molecule by converting glutamine to glutamate. PurL transfers the ammonia molecule to FGAR to form FGAM in an ATP-dependent manner. PurS interacts with PurQ and PurL and is thought to assist in the transfer of the ammonia molecule from PurQ to PurL. The sequence is that of Phosphoribosylformylglycinamidine synthase subunit PurQ from Methanothermobacter thermautotrophicus (strain ATCC 29096 / DSM 1053 / JCM 10044 / NBRC 100330 / Delta H) (Methanobacterium thermoautotrophicum).